Reading from the N-terminus, the 211-residue chain is Proteasome subunit beta 2 (211 aa).

The propeptide at 1–17 (MVIMGNELQLENKILKG) is removed in mature form; by autocatalysis. Thr18 acts as the Nucleophile in catalysis.

Belongs to the peptidase T1B family. The 20S proteasome core is composed of 14 alpha and 14 beta subunits that assemble into four stacked heptameric rings, resulting in a barrel-shaped structure. The two inner rings, each composed of seven catalytic beta subunits, are sandwiched by two outer rings, each composed of seven alpha subunits. The catalytic chamber with the active sites is on the inside of the barrel. Has a gated structure, the ends of the cylinder being occluded by the N-termini of the alpha-subunits. Is capped at one or both ends by the proteasome regulatory ATPase, PAN.

It localises to the cytoplasm. The catalysed reaction is Cleavage of peptide bonds with very broad specificity.. The formation of the proteasomal ATPase PAN-20S proteasome complex, via the docking of the C-termini of PAN into the intersubunit pockets in the alpha-rings, triggers opening of the gate for substrate entry. Interconversion between the open-gate and close-gate conformations leads to a dynamic regulation of the 20S proteasome proteolysis activity. Its function is as follows. Component of the proteasome core, a large protease complex with broad specificity involved in protein degradation. This is Proteasome subunit beta 2 from Saccharolobus solfataricus (strain 98/2) (Sulfolobus solfataricus).